The following is a 320-amino-acid chain: Glutaconate CoA-transferase subunit A (320 aa).

This sequence belongs to the 3-oxoacid CoA-transferase subunit A family. In terms of assembly, heterooctamer of four A and four B subunits.

The protein localises to the cytoplasm. The enzyme catalyses trans-glutaconate + acetyl-CoA = (2E)-glutaconyl-CoA + acetate. It functions in the pathway amino-acid degradation; L-glutamate degradation via hydroxyglutarate pathway; crotonoyl-CoA from L-glutamate: step 3/5. Functionally, catalyzes the transfer of the CoA moiety from acetyl-CoA to (R)-2-hydroxyglutarate and related compounds like glutaconate. This Acidaminococcus fermentans (strain ATCC 25085 / DSM 20731 / CCUG 9996 / CIP 106432 / VR4) protein is Glutaconate CoA-transferase subunit A (gctA).